The chain runs to 431 residues: MSFLVSKPERIRRWVSEKFIVEGLRDLELFGEQPPGDTRRKTNDASSESIAPFSKQEVMGSFLPEGGCYELLTVIGKGFEDLMTVNLARYKPTGEYVTVRRINLEACSNEMVTFLQGELHVSKLFNHPNIVPYRATFIADNELWVVTSFMAYGSAKDLICTHFMDGMNELAIAYILQGVLKALDYIHHMGYVHRSVKASHILISVDGKVYLSGLRSNLSMISHGQRQRVVHDFPKYSIKVLPWLSPEVLQQNLQGYDAKSDIYSVGITACELANGHVPFKDMPATQTLLEKLNGTVPCLLDTSTIPAEELTMSPSRSVANSGLSDSLTTSTPRPSNGDSPSHPYHRTFSPHFHHFVEQCLQRNPDARPSASTLLNHSFFKQIKRRASEALPELLRPVTPITNFEGSQSQDHSGIFGLVTNLEELEVDDWEF.

Ser-2 and Ser-46 each carry phosphoserine. The region spanning 69 to 379 is the Protein kinase domain; it reads YELLTVIGKG…ASTLLNHSFF (311 aa). The tract at residues 310–347 is disordered; it reads LTMSPSRSVANSGLSDSLTTSTPRPSNGDSPSHPYHRT. Residues 312-339 are compositionally biased toward polar residues; sequence MSPSRSVANSGLSDSLTTSTPRPSNGDS. Residues Thr-329 and Thr-401 each carry the phosphothreonine; by LKB1 modification. The residue at position 419 (Thr-419) is a Phosphothreonine.

The protein belongs to the protein kinase superfamily. STE Ser/Thr protein kinase family. STE20 subfamily. As to quaternary structure, component of a trimeric complex composed of STK11/LKB1, STRAD (STRADA or STRADB) and CAB39/MO25 (CAB39/MO25alpha or CAB39L/MO25beta): the complex tethers STK11/LKB1 in the cytoplasm and stimulates its catalytic activity.

The protein localises to the nucleus. It is found in the cytoplasm. In terms of biological role, pseudokinase which, in complex with CAB39/MO25 (CAB39/MO25alpha or CAB39L/MO25beta), binds to and activates STK11/LKB1. Adopts a closed conformation typical of active protein kinases and binds STK11/LKB1 as a pseudosubstrate, promoting conformational change of STK11/LKB1 in an active conformation. This Pongo abelii (Sumatran orangutan) protein is STE20-related kinase adapter protein alpha (STRADA).